The following is a 74-amino-acid chain: Metallothionein-like protein type 2 (74 aa).

This sequence belongs to the metallothionein superfamily. Type 15 family.

Functionally, metallothioneins have a high content of cysteine residues that bind various heavy metals. The sequence is that of Metallothionein-like protein type 2 from Nicotiana plumbaginifolia (Leadwort-leaved tobacco).